The primary structure comprises 397 residues: Elongation factor Tu (397 aa).

Residues 10–206 (KPHCNIGTIG…AVDEYIPQPE (197 aa)) enclose the tr-type G domain. Residues 19-26 (GHIDHGKT) form a G1 region. Residue 19 to 26 (GHIDHGKT) coordinates GTP. Mg(2+) is bound at residue threonine 26. Positions 62–66 (GITIS) are G2. The tract at residues 83-86 (DCPG) is G3. Residues 83–87 (DCPGH) and 138–141 (NKCD) each bind GTP. Residues 138-141 (NKCD) are G4. Residues 176–178 (SAF) are G5.

The protein belongs to the TRAFAC class translation factor GTPase superfamily. Classic translation factor GTPase family. EF-Tu/EF-1A subfamily. As to quaternary structure, monomer.

The protein localises to the cytoplasm. It carries out the reaction GTP + H2O = GDP + phosphate + H(+). Functionally, GTP hydrolase that promotes the GTP-dependent binding of aminoacyl-tRNA to the A-site of ribosomes during protein biosynthesis. In Cutibacterium acnes (strain DSM 16379 / KPA171202) (Propionibacterium acnes), this protein is Elongation factor Tu.